The sequence spans 29 residues: Kappa-theraphotoxin-Ps1a (29 aa).

3 disulfide bridges follow: C2/C16, C9/C21, and C15/C25. I29 carries the isoleucine amide modification.

This sequence belongs to the neurotoxin 30 (phrixotoxin) family. Expressed by the venom gland.

Its subcellular location is the secreted. Functionally, potent and specific blocker of Kv4.2/KCND2 (IC(50)=5 nM) and Kv4.3/KCND3 (IC(50)=28 nM) potassium channels. Acts by altering the gating properties of these channels. Also shows moderate inhibition on human voltage-gated sodium channel Nav1.7/SCN9A activation (IC(50)=423 nM). This is Kappa-theraphotoxin-Ps1a from Paraphysa scrofa (Chilean copper tarantula).